Consider the following 423-residue polypeptide: ATP-dependent Clp protease ATP-binding subunit ClpX (423 aa).

Residues 1 to 50 (MTDDTEYRCSFCGKEHHQVDDLIAGPDVRICSECVVLSCEIVEDRRNEAL) form the ClpX-type ZB domain. Zn(2+) contacts are provided by C9, C12, C31, and C34. Residue 126-133 (PTGCGKTY) coordinates ATP.

This sequence belongs to the ClpX chaperone family. In terms of assembly, component of the ClpX-ClpP complex. Forms a hexameric ring that, in the presence of ATP, binds to fourteen ClpP subunits assembled into a disk-like structure with a central cavity, resembling the structure of eukaryotic proteasomes.

ATP-dependent specificity component of the Clp protease. It directs the protease to specific substrates. Can perform chaperone functions in the absence of ClpP. The protein is ATP-dependent Clp protease ATP-binding subunit ClpX of Tropheryma whipplei (strain TW08/27) (Whipple's bacillus).